We begin with the raw amino-acid sequence, 78 residues long: uncharacterized protein (78 aa).

2 helical membrane passes run 20–40 and 57–77; these read SVYFPPFFKAFAFGFVIWLVV and LLMDLSLFAICVCLALAILIA.

It is found in the cell membrane. This is an uncharacterized protein from Escherichia coli (strain K12).